The sequence spans 277 residues: Large ribosomal subunit protein uL2 (277 aa).

The disordered stretch occupies residues 225 to 277 (MNPVDHPHGGGEGKTSGGRNSVTPWGVPTKGKKTRKRGKHSDKYIKVSSVRKR). Positions 254–264 (KGKKTRKRGKH) are enriched in basic residues.

The protein belongs to the universal ribosomal protein uL2 family. In terms of assembly, part of the 50S ribosomal subunit. Forms a bridge to the 30S subunit in the 70S ribosome.

Its function is as follows. One of the primary rRNA binding proteins. Required for association of the 30S and 50S subunits to form the 70S ribosome, for tRNA binding and peptide bond formation. It has been suggested to have peptidyltransferase activity; this is somewhat controversial. Makes several contacts with the 16S rRNA in the 70S ribosome. The chain is Large ribosomal subunit protein uL2 from Anaplasma marginale (strain Florida).